Consider the following 300-residue polypeptide: Pantothenate synthetase (300 aa).

An ATP-binding site is contributed by 30 to 37; that stretch reads MGYLHEGH. H37 (proton donor) is an active-site residue. Residue Q61 coordinates (R)-pantoate. Q61 serves as a coordination point for beta-alanine. 147 to 150 lines the ATP pocket; the sequence is GMKD. Residue Q153 coordinates (R)-pantoate. ATP contacts are provided by residues V176 and 184 to 187; that span reads KSSR.

This sequence belongs to the pantothenate synthetase family. Homodimer.

It is found in the cytoplasm. It carries out the reaction (R)-pantoate + beta-alanine + ATP = (R)-pantothenate + AMP + diphosphate + H(+). It participates in cofactor biosynthesis; (R)-pantothenate biosynthesis; (R)-pantothenate from (R)-pantoate and beta-alanine: step 1/1. Functionally, catalyzes the condensation of pantoate with beta-alanine in an ATP-dependent reaction via a pantoyl-adenylate intermediate. The protein is Pantothenate synthetase of Geobacillus kaustophilus (strain HTA426).